A 96-amino-acid polypeptide reads, in one-letter code: Large ribosomal subunit protein bL25 (96 aa).

Belongs to the bacterial ribosomal protein bL25 family. As to quaternary structure, part of the 50S ribosomal subunit; part of the 5S rRNA/L5/L18/L25 subcomplex. Contacts the 5S rRNA. Binds to the 5S rRNA independently of L5 and L18.

This is one of the proteins that binds to the 5S RNA in the ribosome where it forms part of the central protuberance. The sequence is that of Large ribosomal subunit protein bL25 from Francisella tularensis subsp. tularensis (strain FSC 198).